The primary structure comprises 513 residues: ATP synthase subunit alpha (513 aa).

169 to 176 (GDRQIGKT) is a binding site for ATP.

This sequence belongs to the ATPase alpha/beta chains family. As to quaternary structure, F-type ATPases have 2 components, CF(1) - the catalytic core - and CF(0) - the membrane proton channel. CF(1) has five subunits: alpha(3), beta(3), gamma(1), delta(1), epsilon(1). CF(0) has three main subunits: a(1), b(2) and c(9-12). The alpha and beta chains form an alternating ring which encloses part of the gamma chain. CF(1) is attached to CF(0) by a central stalk formed by the gamma and epsilon chains, while a peripheral stalk is formed by the delta and b chains.

It is found in the cell inner membrane. The catalysed reaction is ATP + H2O + 4 H(+)(in) = ADP + phosphate + 5 H(+)(out). Produces ATP from ADP in the presence of a proton gradient across the membrane. The alpha chain is a regulatory subunit. The chain is ATP synthase subunit alpha from Vibrio alginolyticus.